The chain runs to 463 residues: Elongation factor 1-alpha 1 (463 aa).

One can recognise a tr-type G domain in the interval 5–242 (KIHINIVVIG…DAILPPARPT (238 aa)). A G1 region spans residues 14-21 (GHVDSGKS). 14–21 (GHVDSGKS) contributes to the GTP binding site. Positions 70 to 74 (GITID) are G2. The tract at residues 91 to 94 (DAPG) is G3. Residues 91–95 (DAPGH) and 153–156 (NKMD) each bind GTP. Residues 153 to 156 (NKMD) are G4. Positions 194 to 196 (SGW) are G5. A 5-glutamyl glycerylphosphorylethanolamine mark is found at glutamate 301 and glutamate 374.

This sequence belongs to the TRAFAC class translation factor GTPase superfamily. Classic translation factor GTPase family. EF-Tu/EF-1A subfamily.

Its subcellular location is the cytoplasm. Its function is as follows. This protein promotes the GTP-dependent binding of aminoacyl-tRNA to the A-site of ribosomes during protein biosynthesis. This is Elongation factor 1-alpha 1 from Drosophila melanogaster (Fruit fly).